Reading from the N-terminus, the 984-residue chain is Glycine dehydrogenase (decarboxylating) (984 aa).

The residue at position 702 (K702) is an N6-(pyridoxal phosphate)lysine.

The protein belongs to the GcvP family. The glycine cleavage system is composed of four proteins: P, T, L and H. Pyridoxal 5'-phosphate is required as a cofactor.

The catalysed reaction is N(6)-[(R)-lipoyl]-L-lysyl-[glycine-cleavage complex H protein] + glycine + H(+) = N(6)-[(R)-S(8)-aminomethyldihydrolipoyl]-L-lysyl-[glycine-cleavage complex H protein] + CO2. In terms of biological role, the glycine cleavage system catalyzes the degradation of glycine. The P protein binds the alpha-amino group of glycine through its pyridoxal phosphate cofactor; CO(2) is released and the remaining methylamine moiety is then transferred to the lipoamide cofactor of the H protein. The protein is Glycine dehydrogenase (decarboxylating) of Xanthomonas oryzae pv. oryzae (strain MAFF 311018).